The primary structure comprises 602 residues: Bifunctional lycopene cyclase/phytoene synthase (602 aa).

The interval methionine 1–glutamine 241 is lycopene beta-cyclase. The next 7 helical transmembrane spans lie at phenylalanine 6–isoleucine 26, isoleucine 30–aspartate 50, phenylalanine 76–phenylalanine 96, valine 118–alanine 138, tyrosine 146–glycine 166, phenylalanine 168–leucine 188, and methionine 230–proline 250. The tract at residues alanine 248 to glutamine 602 is phytoene synthase.

The protein in the N-terminal section; belongs to the lycopene beta-cyclase family. It in the C-terminal section; belongs to the phytoene/squalene synthase family.

Its subcellular location is the membrane. It carries out the reaction all-trans-lycopene = gamma-carotene. It catalyses the reaction gamma-carotene = all-trans-beta-carotene. The catalysed reaction is 2 (2E,6E,10E)-geranylgeranyl diphosphate = 15-cis-phytoene + 2 diphosphate. It functions in the pathway carotenoid biosynthesis; beta-carotene biosynthesis. Its pathway is carotenoid biosynthesis; phytoene biosynthesis; all-trans-phytoene from geranylgeranyl diphosphate: step 1/1. In terms of biological role, bifunctional enzyme that catalyzes the reactions from geranylgeranyl diphosphate to phytoene (phytoene synthase) and from lycopene to beta-carotene via the intermediate gamma-carotene and from 3,4-didehydrolycopene to torulene (lycopene cyclase). Torulene is further processed to the acidic carotenoid neurosporaxanthin. The cyclase preferentially catalyzes single cyclizations at only one end of the substrate to produce monocyclic carotenoids. Neurosporaxanthin is synthesized from geranyl-geranyl pyrophosphate (GGPP) through several enzymatic activities. Phytoene synthase activity performed by the bifunctional enzyme al-2 first produces phytoene from geranyl-geranyl pyrophosphate (GGPP). The phytoene dehydrogenase al-1 then introduces 5 desaturations to lead to 3,4-didehydrolycopene via the intermediates phytofluene, zeta-carotene, neurosporene and lycopene. Al-2 cyclase activity then converts 3,4-didehydrolycopene into torulene. Al-2 can also convet lycopene into gamma-carotene which in turn is converted to beta-carotene by an additional al-2 cyclization reaction. Torulene is the substrate of the dioxidase cao-2 that breaks the molecule, removing five carbon atoms to yield beta-apo-4'-carotenal, whereas the aldehyde dehydrogenase ylo-1 mediates the last step by converting beta-apo-4'-carotenal into neurosporaxanthin. In Neurospora crassa (strain ATCC 24698 / 74-OR23-1A / CBS 708.71 / DSM 1257 / FGSC 987), this protein is Bifunctional lycopene cyclase/phytoene synthase.